The primary structure comprises 130 residues: Small ribosomal subunit protein uS9 (130 aa).

This sequence belongs to the universal ribosomal protein uS9 family.

This is Small ribosomal subunit protein uS9 from Enterococcus faecalis (strain ATCC 700802 / V583).